The following is a 110-amino-acid chain: Defensin-like protein 296 (110 aa).

The N-terminal stretch at 1–28 (MASKITIFFVLALVVVCTMMVCIPTATA) is a signal peptide. 6 disulfide bridges follow: Cys34-Cys52, Cys40-Cys57, Cys45-Cys59, Cys81-Cys102, Cys87-Cys107, and Cys95-Cys109.

It belongs to the DEFL family.

The protein resides in the secreted. This Arabidopsis thaliana (Mouse-ear cress) protein is Defensin-like protein 296.